The primary structure comprises 78 residues: NEDD8-like protein RUB3 (78 aa).

Glycine 76 participates in a covalent cross-link: Glycyl lysine isopeptide (Gly-Lys) (interchain with K-? in acceptor proteins). The propeptide occupies 77–78; the sequence is CC.

As to expression, detected in stems and flower buds, but not in leaves, mature flowers and seedlings.

Its function is as follows. May function as a stable post-translational protein modifier. This chain is NEDD8-like protein RUB3 (RUB3), found in Arabidopsis thaliana (Mouse-ear cress).